The primary structure comprises 183 residues: Large ribosomal subunit protein uL6 (183 aa).

This sequence belongs to the universal ribosomal protein uL6 family. Part of the 50S ribosomal subunit.

This protein binds to the 23S rRNA, and is important in its secondary structure. It is located near the subunit interface in the base of the L7/L12 stalk, and near the tRNA binding site of the peptidyltransferase center. The chain is Large ribosomal subunit protein uL6 from Chlamydia felis (strain Fe/C-56) (Chlamydophila felis).